Consider the following 203-residue polypeptide: Probable flagellin 1 (203 aa).

Residues 1–6 constitute a propeptide that is removed on maturation; that stretch reads MRRRRG.

It belongs to the archaeal flagellin family.

It is found in the archaeal flagellum. In terms of biological role, flagellin is the subunit protein which polymerizes to form the filaments of archaeal flagella. This is Probable flagellin 1 (flaB1) from Aeropyrum pernix (strain ATCC 700893 / DSM 11879 / JCM 9820 / NBRC 100138 / K1).